Here is a 234-residue protein sequence, read N- to C-terminus: Structural PPIase-like protein L605 (234 aa).

A PPIase cyclophilin-type domain is found at 18–205; that stretch reads YMDIVLNNEI…PTFSIGKCGA (188 aa).

This sequence belongs to the cyclophilin-type PPIase family. In terms of assembly, homotrimer.

Its subcellular location is the virion. The protein resides in the host cytoplasm. This is Structural PPIase-like protein L605 from Acanthamoeba polyphaga mimivirus (APMV).